Here is a 1112-residue protein sequence, read N- to C-terminus: Zinc finger protein 654 (1112 aa).

The disordered stretch occupies residues 482–514; that stretch reads PSSSLKKRVDQQSVEEDQSTGETDPDDASVVQP. Residues 494-508 are compositionally biased toward acidic residues; that stretch reads SVEEDQSTGETDPDD. C2H2-type zinc fingers lie at residues 566–588, 738–763, 779–801, 807–831, and 836–860; these read FACV…LKNH, FKCP…RTVH, GKCK…LNRH, YFCL…TKSH, and AQCS…EAQH. Disordered stretches follow at residues 885–906 and 997–1018; these read FSNE…KYST and VESQ…NLTS. 2 stretches are compositionally biased toward polar residues: residues 886-899 and 1002-1018; these read SNEN…VSTS and HSAL…NLTS. Serine 1107 and serine 1111 each carry phosphoserine.

The protein belongs to the krueppel C2H2-type zinc-finger protein family.

Its subcellular location is the nucleus. Its function is as follows. May be involved in transcriptional regulation. This Mus musculus (Mouse) protein is Zinc finger protein 654.